A 494-amino-acid chain; its full sequence is Histidine--tRNA ligase (494 aa).

Positions 1–20 are disordered; that stretch reads MAKDQKKQPRPKAETPKGFR.

It belongs to the class-II aminoacyl-tRNA synthetase family. As to quaternary structure, homodimer.

It localises to the cytoplasm. It catalyses the reaction tRNA(His) + L-histidine + ATP = L-histidyl-tRNA(His) + AMP + diphosphate + H(+). The chain is Histidine--tRNA ligase from Paracoccus denitrificans (strain Pd 1222).